A 245-amino-acid chain; its full sequence is tRNA pseudouridine synthase A (245 aa).

The Nucleophile role is filled by Asp52. Substrate is bound at residue Tyr110.

It belongs to the tRNA pseudouridine synthase TruA family. As to quaternary structure, homodimer.

It catalyses the reaction uridine(38/39/40) in tRNA = pseudouridine(38/39/40) in tRNA. In terms of biological role, formation of pseudouridine at positions 38, 39 and 40 in the anticodon stem and loop of transfer RNAs. The polypeptide is tRNA pseudouridine synthase A (Borrelia duttonii (strain Ly)).